Reading from the N-terminus, the 68-residue chain is Tetrahydromethanopterin S-methyltransferase subunit F (68 aa).

A helical transmembrane segment spans residues I45–L65.

Belongs to the MtrF family. In terms of assembly, the complex is composed of 8 subunits; MtrA, MtrB, MtrC, MtrD, MtrE, MtrF, MtrG and MtrH.

The protein resides in the cell membrane. The catalysed reaction is 5-methyl-5,6,7,8-tetrahydromethanopterin + coenzyme M + 2 Na(+)(in) = 5,6,7,8-tetrahydromethanopterin + methyl-coenzyme M + 2 Na(+)(out). The protein operates within one-carbon metabolism; methanogenesis from CO(2); methyl-coenzyme M from 5,10-methylene-5,6,7,8-tetrahydromethanopterin: step 2/2. Functionally, part of a complex that catalyzes the formation of methyl-coenzyme M and tetrahydromethanopterin from coenzyme M and methyl-tetrahydromethanopterin. This is an energy-conserving, sodium-ion translocating step. This Methanothermobacter marburgensis (strain ATCC BAA-927 / DSM 2133 / JCM 14651 / NBRC 100331 / OCM 82 / Marburg) (Methanobacterium thermoautotrophicum) protein is Tetrahydromethanopterin S-methyltransferase subunit F (mtrF).